The chain runs to 195 residues: Large ribosomal subunit protein eL15 (195 aa).

The tract at residues 174–195 (GHGRLGSAKSRPSIRANGRLRR) is disordered.

It belongs to the eukaryotic ribosomal protein eL15 family.

This is Large ribosomal subunit protein eL15 from Picrophilus torridus (strain ATCC 700027 / DSM 9790 / JCM 10055 / NBRC 100828 / KAW 2/3).